The primary structure comprises 362 residues: Protein-glutamate methylesterase/protein-glutamine glutaminase (362 aa).

The Response regulatory domain occupies 5–122; it reads KVLCVDDSAL…RDGMLDYSEK (118 aa). Residue aspartate 56 is modified to 4-aspartylphosphate. A CheB-type methylesterase domain is found at 163-355; that stretch reads LLSTEKLIIV…RRVMARLSSM (193 aa). Catalysis depends on residues serine 175, histidine 201, and aspartate 297.

Belongs to the CheB family. Phosphorylated by CheA. Phosphorylation of the N-terminal regulatory domain activates the methylesterase activity.

It localises to the cytoplasm. The catalysed reaction is [protein]-L-glutamate 5-O-methyl ester + H2O = L-glutamyl-[protein] + methanol + H(+). It catalyses the reaction L-glutaminyl-[protein] + H2O = L-glutamyl-[protein] + NH4(+). Functionally, involved in chemotaxis. Part of a chemotaxis signal transduction system that modulates chemotaxis in response to various stimuli. Catalyzes the demethylation of specific methylglutamate residues introduced into the chemoreceptors (methyl-accepting chemotaxis proteins or MCP) by CheR. Also mediates the irreversible deamidation of specific glutamine residues to glutamic acid. This chain is Protein-glutamate methylesterase/protein-glutamine glutaminase, found in Paraburkholderia xenovorans (strain LB400).